A 178-amino-acid polypeptide reads, in one-letter code: Large ribosomal subunit protein uL6 (178 aa).

It belongs to the universal ribosomal protein uL6 family. Part of the 50S ribosomal subunit.

Functionally, this protein binds to the 23S rRNA, and is important in its secondary structure. It is located near the subunit interface in the base of the L7/L12 stalk, and near the tRNA binding site of the peptidyltransferase center. The sequence is that of Large ribosomal subunit protein uL6 from Helicobacter pylori (strain Shi470).